We begin with the raw amino-acid sequence, 69 residues long: U2-agatoxin-Ao1i (69 aa).

Residues 1 to 20 form the signal peptide; sequence MKAIISLLLISAMVFSMIEA. The propeptide occupies 21–34; the sequence is VPVXXGLQLFESER. 3 cysteine pairs are disulfide-bonded: cysteine 36–cysteine 52, cysteine 43–cysteine 57, and cysteine 51–cysteine 67. Position 68 is a leucine amide (leucine 68).

It belongs to the neurotoxin 01 (U2-agtx) family. Expressed by the venom gland.

The protein localises to the secreted. In terms of biological role, insect active toxin causing rapid but reversible paralysis in crickets. No activity shown in mammals. Does not show effect on mammalian voltage-gated calcium channels. In Agelena orientalis (Funnel-web spider), this protein is U2-agatoxin-Ao1i.